A 120-amino-acid chain; its full sequence is UPF0102 protein CbuK_0265 (120 aa).

Belongs to the UPF0102 family.

This Coxiella burnetii (strain CbuK_Q154) (Coxiella burnetii (strain Q154)) protein is UPF0102 protein CbuK_0265.